The chain runs to 236 residues: Carboxymethylenebutenolidase (236 aa).

Catalysis depends on residues C123, D171, and H202.

This sequence belongs to the dienelactone hydrolase family. In terms of assembly, monomer.

It catalyses the reaction 2-(5-oxo-2,5-dihydrofuran-2-ylidene)acetate + H2O = 4-oxohex-2-enedioate + H(+). It functions in the pathway aromatic compound metabolism; 3-chlorocatechol degradation. In terms of biological role, ring cleavage of cyclic ester dienelactone to produce maleylacetate. The chain is Carboxymethylenebutenolidase (clcD) from Pseudomonas knackmussii (strain DSM 6978 / CCUG 54928 / LMG 23759 / B13).